We begin with the raw amino-acid sequence, 258 residues long: Synapse differentiation-inducing gene protein 1-like (258 aa).

Topologically, residues 1-182 are extracellular; that stretch reads MESLSELQNP…FIVIPPRDHL (182 aa). Residues 183–203 form a helical membrane-spanning segment; the sequence is GLAIFSMLCCFWPLGIAAFYF. At 204–228 the chain is on the cytoplasmic side; that stretch reads SQGTSKAVTKGDFPLASIASRRALF. A helical membrane pass occupies residues 229-249; the sequence is LAALSITIGTGVYVGVVVALI. At 250-258 the chain is on the extracellular side; sequence AYLSKPGHI.

The protein belongs to the CD225/Dispanin family.

Its subcellular location is the membrane. It localises to the golgi apparatus. The protein localises to the cis-Golgi network. The sequence is that of Synapse differentiation-inducing gene protein 1-like (syndig1l) from Danio rerio (Zebrafish).